A 130-amino-acid chain; its full sequence is Small ribosomal subunit protein uS9 (130 aa).

The protein belongs to the universal ribosomal protein uS9 family.

In Clostridium beijerinckii (strain ATCC 51743 / NCIMB 8052) (Clostridium acetobutylicum), this protein is Small ribosomal subunit protein uS9.